Here is a 259-residue protein sequence, read N- to C-terminus: uncharacterized protein (259 aa).

This is an uncharacterized protein from Methanocaldococcus jannaschii (strain ATCC 43067 / DSM 2661 / JAL-1 / JCM 10045 / NBRC 100440) (Methanococcus jannaschii).